The primary structure comprises 846 residues: Interleukin cytokine receptor-related protein 1 (846 aa).

A signal peptide spans 1-25 (MFLHSPALLIWLFLFCLAGPQAVRT). At 26-418 (EPYNSTSSSS…KEDTTWTWHT (393 aa)) the chain is on the extracellular side. Residues Asn29, Asn79, Asn186, Asn214, Asn339, and Asn395 are each glycosylated (N-linked (GlcNAc...) asparagine). Residues 388 to 409 (EKPPATSNQTEESDGKAEKDKK) form a disordered region. Basic and acidic residues predominate over residues 400–409 (SDGKAEKDKK). Residues 419–439 (YAITGGAIIAILFILSVCAGL) form a helical membrane-spanning segment. Topologically, residues 440 to 846 (KCYKKFNNKK…AFHDEVIGIH (407 aa)) are cytoplasmic. Residues 476–618 (SISVLIVYSH…IPNSLMTMTT (143 aa)) form the SEFIR domain. Positions 737–771 (GPIHVEPTEPEVLEPAEEPMEEAEEDEEDEDDVDS) are disordered. Over residues 744–771 (TEPEVLEPAEEPMEEAEEDEEDEDDVDS) the composition is skewed to acidic residues.

Component of a heterodimeric receptor complex composed of ilcr-1 and ilcr-2. The receptor complex interacts with actl-1 and ilc-17.1 with the interaction being mediated by ilcr-2. Expressed in most neurons.

Its subcellular location is the cell membrane. Functionally, forms a receptor complex together with receptor ilcr-2, which upon activation acts as a modulator of neuronal activity. Binding of the ligand ilc-17.1 to the ilcr-1/2 receptor complex triggers a signaling cascade that activates the downstream signaling components actl-1, pik-1 and nfki-1, and results in increased neuronal activity in RMG interneurons in response to input from oxygen-sensing neurons. This leads to increased animal movement and promotes aggregation behavior. This is Interleukin cytokine receptor-related protein 1 from Caenorhabditis elegans.